Reading from the N-terminus, the 421-residue chain is Glutamate-1-semialdehyde 2,1-aminomutase 1 (421 aa).

Lysine 258 carries the N6-(pyridoxal phosphate)lysine modification.

It belongs to the class-III pyridoxal-phosphate-dependent aminotransferase family. HemL subfamily. Requires pyridoxal 5'-phosphate as cofactor.

It localises to the cytoplasm. It catalyses the reaction (S)-4-amino-5-oxopentanoate = 5-aminolevulinate. It functions in the pathway porphyrin-containing compound metabolism; protoporphyrin-IX biosynthesis; 5-aminolevulinate from L-glutamyl-tRNA(Glu): step 2/2. The protein is Glutamate-1-semialdehyde 2,1-aminomutase 1 of Cenarchaeum symbiosum (strain A).